The following is a 1337-amino-acid chain: C-Jun-amino-terminal kinase-interacting protein 3 (1337 aa).

One can recognise an RH1 domain in the interval Val12–Leu100. The kinesin-binding domain (KBD); essential for its function in axon elongation stretch occupies residues Glu50–Leu80. A coiled-coil region spans residues Leu58–Glu177. Disordered regions lie at residues Lys183–Val211 and Ser245–Ala285. Positions Met184–Pro198 are enriched in polar residues. The interval Asn210 to Lys226 is JNK-binding domain (JBD); essential for its function in axon elongation. Residues Ser261–Thr270 show a composition bias toward low complexity. Phosphothreonine; by MAPK occurs at positions 266, 276, and 287. A compositionally biased stretch (polar residues) spans Gly271 to Pro282. Phosphoserine; by ROCK1 occurs at positions 315 and 365. Ser366 carries the post-translational modification Phosphoserine. Residues Leu424–Leu459 form a leucine zipper-like domain (LZ); essential for its function in axon elongation region. Residues Ala437–Met555 adopt a coiled-coil conformation. Positions Leu459 to Lys515 are interaction with NTRK2. An RH2 domain is found at Arg521 to Pro595. Phosphoserine is present on Ser603. The tract at residues Asp633–Val655 is disordered. Residues Ala639–Val655 show a composition bias toward basic and acidic residues. At Ser677 the chain carries Phosphoserine. Disordered regions lie at residues Trp719 to Ser772 and Pro859 to Ser966. Residues Leu739 to Pro765 show a composition bias toward basic and acidic residues. Polar residues-rich tracts occupy residues Val879–Ser892 and Glu941–Gln952.

This sequence belongs to the JIP scaffold family. As to quaternary structure, forms homo- or heterooligomeric complexes. The central region of MAPK8IP3 interacts with the C-terminal of MAPK8IP2 but not MAPK8IP1. Binds specific components of the JNK signaling pathway namely MAPK8/JNK1, MAPK9/JNK2 and MAPK10/JNK3 to the N-terminal region, MAP2K4/MKK4 and MAP2K7/MKK7 to the central region and MAP3K11 to the C-terminal region. Binds the TPR motif-containing C-terminal of kinesin light chain, KLC1. Pre-assembled MAPK8IP1 scaffolding complexes are then transported as a cargo of kinesin, to the required subcellular location. Interacts with ROCK1 and this interaction is enhanced by ultraviolet-B (UVB) radiation. Interacts with SH3RF2. Interacts with NTRK2/TRKB and NTRK3/TRKC. Phosphorylation by ROCK1 is crucial for the recruitment of JNK. As to expression, highly expressed throughout many regions of the brain and at lower levels in the heart, liver, lung, testes and kidney. All isoforms have been identified in the brain, isoform 1a is also expressed in the spleen and lung.

Its subcellular location is the cytoplasm. It is found in the golgi apparatus. The protein localises to the cytoplasmic vesicle. The protein resides in the cell projection. It localises to the growth cone. Its subcellular location is the axon. It is found in the dendrite. The protein localises to the perinuclear region. In terms of biological role, the JNK-interacting protein (JIP) group of scaffold proteins selectively mediates JNK signaling by aggregating specific components of the MAPK cascade to form a functional JNK signaling module. May function as a regulator of vesicle transport, through interactions with the JNK-signaling components and motor proteins. Promotes neuronal axon elongation in a kinesin- and JNK-dependent manner. Activates cofilin at axon tips via local activation of JNK, thereby regulating filopodial dynamics and enhancing axon elongation. Its binding to kinesin heavy chains (KHC), promotes kinesin-1 motility along microtubules and is essential for axon elongation and regeneration. Regulates cortical neuronal migration by mediating NTRK2/TRKB anterograde axonal transport during brain development. Acts as an adapter that bridges the interaction between NTRK2/TRKB and KLC1 and drives NTRK2/TRKB axonal but not dendritic anterograde transport, which is essential for subsequent BDNF-triggered signaling and filopodia formation. This Mus musculus (Mouse) protein is C-Jun-amino-terminal kinase-interacting protein 3 (Mapk8ip3).